Here is a 311-residue protein sequence, read N- to C-terminus: Methionyl-tRNA formyltransferase (311 aa).

110–113 lines the (6S)-5,6,7,8-tetrahydrofolate pocket; it reads SLLP.

This sequence belongs to the Fmt family.

It catalyses the reaction L-methionyl-tRNA(fMet) + (6R)-10-formyltetrahydrofolate = N-formyl-L-methionyl-tRNA(fMet) + (6S)-5,6,7,8-tetrahydrofolate + H(+). Attaches a formyl group to the free amino group of methionyl-tRNA(fMet). The formyl group appears to play a dual role in the initiator identity of N-formylmethionyl-tRNA by promoting its recognition by IF2 and preventing the misappropriation of this tRNA by the elongation apparatus. The protein is Methionyl-tRNA formyltransferase of Streptococcus pyogenes serotype M49 (strain NZ131).